The sequence spans 557 residues: Glucose-6-phosphate isomerase (557 aa).

Glu-361 (proton donor) is an active-site residue. Residues His-392 and Lys-520 contribute to the active site.

This sequence belongs to the GPI family.

It localises to the cytoplasm. The enzyme catalyses alpha-D-glucose 6-phosphate = beta-D-fructose 6-phosphate. It functions in the pathway carbohydrate biosynthesis; gluconeogenesis. Its pathway is carbohydrate degradation; glycolysis; D-glyceraldehyde 3-phosphate and glycerone phosphate from D-glucose: step 2/4. Its function is as follows. Catalyzes the reversible isomerization of glucose-6-phosphate to fructose-6-phosphate. The protein is Glucose-6-phosphate isomerase of Acinetobacter venetianus (strain ATCC 31012 / DSM 23050 / BCRC 14357 / CCUG 45561 / CIP 110063 / KCTC 2702 / LMG 19082 / RAG-1).